We begin with the raw amino-acid sequence, 101 residues long: DNA-directed RNA polymerase subunit beta (101 aa).

The segment at 74 to 101 is disordered; the sequence is KRRLSALGPGGLSRERAGLEVRDVHSSH. The segment covering 86 to 101 has biased composition (basic and acidic residues); sequence SRERAGLEVRDVHSSH.

This sequence belongs to the RNA polymerase beta chain family. As to quaternary structure, the RNAP catalytic core consists of 2 alpha, 1 beta, 1 beta' and 1 omega subunit. When a sigma factor is associated with the core the holoenzyme is formed, which can initiate transcription.

The enzyme catalyses RNA(n) + a ribonucleoside 5'-triphosphate = RNA(n+1) + diphosphate. Functionally, DNA-dependent RNA polymerase catalyzes the transcription of DNA into RNA using the four ribonucleoside triphosphates as substrates. This chain is DNA-directed RNA polymerase subunit beta (rpoB), found in Mycolicibacterium peregrinum (Mycobacterium peregrinum).